Reading from the N-terminus, the 474-residue chain is ATP synthase subunit beta 1 (474 aa).

157 to 164 (GGAGVGKT) provides a ligand contact to ATP.

The protein belongs to the ATPase alpha/beta chains family. In terms of assembly, F-type ATPases have 2 components, CF(1) - the catalytic core - and CF(0) - the membrane proton channel. CF(1) has five subunits: alpha(3), beta(3), gamma(1), delta(1), epsilon(1). CF(0) has three main subunits: a(1), b(2) and c(9-12). The alpha and beta chains form an alternating ring which encloses part of the gamma chain. CF(1) is attached to CF(0) by a central stalk formed by the gamma and epsilon chains, while a peripheral stalk is formed by the delta and b chains.

It localises to the cell inner membrane. It carries out the reaction ATP + H2O + 4 H(+)(in) = ADP + phosphate + 5 H(+)(out). Produces ATP from ADP in the presence of a proton gradient across the membrane. The catalytic sites are hosted primarily by the beta subunits. This is ATP synthase subunit beta 1 from Polaromonas naphthalenivorans (strain CJ2).